The primary structure comprises 574 residues: Arginine--tRNA ligase (574 aa).

The 'HIGH' region motif lies at 124–134; the sequence is ANPNGPLHIGH.

The protein belongs to the class-I aminoacyl-tRNA synthetase family.

It localises to the cytoplasm. It carries out the reaction tRNA(Arg) + L-arginine + ATP = L-arginyl-tRNA(Arg) + AMP + diphosphate. This Methanococcus aeolicus (strain ATCC BAA-1280 / DSM 17508 / OCM 812 / Nankai-3) protein is Arginine--tRNA ligase.